The sequence spans 591 residues: MEKRTSYCGELNEAHIGQSVVLHGWVQKRRDLGGLIFIDLRDREGIVQVVFNPEFSKEALEIADSVRNEFVVTIKGTVHARGEKAINDKLATGKVEVLAEEITILNTSKTPPFYIEDGVNVSDELRLKYRYLDLRRPEMNNIFKMRHTVTRTFRNKLDALGFFDIETPYLTKSTPEGARDYLVPSRVYPGNFYALPQSPQILKQLLMTAGFDKYYQIVRCFRDEDLRGDRQPEFTQIDLETSFLTKEEIQAITEDMLVDVVKEAKNITIDKPFPRMTYKEAMDRFGSDKPDIRFGLELVNVSDVVKDVDFKVFQSAIENGGEVKAINAKAAAANFSRKDLDALGVFVANYGAKGLAWLKVEAGELKGPIAKFFPEEKATELKASLQAEDGDLLLFAADKADIVAASLGALRNKLGKELNLINEEELAFLWVTDWPLFEYDEEAGRYVSAHHPFTLPKEEDIPLLETDSSKVMAEAYDIVLNGYEIGGGSLRIYKKEVQESMFRALGFTDESAKEQFGFLMDALEYGTPPHGGIALGLDRIVMILAGRNNLRDTIAFPKTGSAVDPLTNAPGEVSEAQLAELKLETVKKETN.

E176 is a binding site for L-aspartate. Residues 200–203 (QILK) are aspartate. R222 provides a ligand contact to L-aspartate. Residues 222 to 224 (RDE) and Q231 each bind ATP. H450 contributes to the L-aspartate binding site. E484 serves as a coordination point for ATP. Position 491 (R491) interacts with L-aspartate. 536 to 539 (GLDR) is an ATP binding site.

Belongs to the class-II aminoacyl-tRNA synthetase family. Type 1 subfamily. As to quaternary structure, homodimer.

The protein resides in the cytoplasm. The enzyme catalyses tRNA(Asp) + L-aspartate + ATP = L-aspartyl-tRNA(Asp) + AMP + diphosphate. Functionally, catalyzes the attachment of L-aspartate to tRNA(Asp) in a two-step reaction: L-aspartate is first activated by ATP to form Asp-AMP and then transferred to the acceptor end of tRNA(Asp). The protein is Aspartate--tRNA ligase of Listeria monocytogenes serotype 4b (strain F2365).